Consider the following 225-residue polypeptide: Putative N-acetylmannosamine-6-phosphate 2-epimerase (225 aa).

It belongs to the NanE family.

It catalyses the reaction an N-acyl-D-glucosamine 6-phosphate = an N-acyl-D-mannosamine 6-phosphate. It functions in the pathway amino-sugar metabolism; N-acetylneuraminate degradation; D-fructose 6-phosphate from N-acetylneuraminate: step 3/5. Functionally, converts N-acetylmannosamine-6-phosphate (ManNAc-6-P) to N-acetylglucosamine-6-phosphate (GlcNAc-6-P). This chain is Putative N-acetylmannosamine-6-phosphate 2-epimerase, found in Vibrio vulnificus (strain CMCP6).